The following is a 508-amino-acid chain: Maturase K (508 aa).

This sequence belongs to the intron maturase 2 family. MatK subfamily.

The protein resides in the plastid. The protein localises to the chloroplast. Its function is as follows. Usually encoded in the trnK tRNA gene intron. Probably assists in splicing its own and other chloroplast group II introns. The polypeptide is Maturase K (Ranunculus glacialis (Glacier buttercup)).